The chain runs to 200 residues: Charged multivesicular body protein 6 (200 aa).

Gly-2 is lipidated: N-myristoyl glycine. Positions 10–145 (QSRVTEQDRA…YQRQIDELLA (136 aa)) form a coiled coil. Ser-119 is modified (phosphoserine). Thr-130 carries the post-translational modification Phosphothreonine. Residues 168–179 (MELPEVPSEPLP) carry the Type-2 MIT-interacting motif motif. The interval 168–200 (MELPEVPSEPLPDRNPEAPAKARSRQAELVAAS) is disordered.

Belongs to the SNF7 family. Probable core component of the endosomal sorting required for transport complex III (ESCRT-III). ESCRT-III components are thought to multimerize to form a flat lattice on the perimeter membrane of the endosome. Several assembly forms of ESCRT-III may exist that interact and act sequentially. Interacts with VPS4A; the interaction is direct. Interacts with VPS4B; the interaction is direct. Interacts with CHMP4A, CHMP4B and CHMP4C. Interacts with SNF8, VPS25 and VPS36. Post-translationally, ISGylated in a CHMP5-dependent manner. Isgylation weakens its interaction with VPS4A.

The protein resides in the endomembrane system. It is found in the endosome membrane. The protein localises to the late endosome membrane. It localises to the membrane. Probable core component of the endosomal sorting required for transport complex III (ESCRT-III) which is involved in multivesicular bodies (MVBs) formation and sorting of endosomal cargo proteins into MVBs. MVBs contain intraluminal vesicles (ILVs) that are generated by invagination and scission from the limiting membrane of the endosome and mostly are delivered to lysosomes enabling degradation of membrane proteins, such as stimulated growth factor receptors, lysosomal enzymes and lipids. The MVB pathway appears to require the sequential function of ESCRT-O, -I,-II and -III complexes. ESCRT-III proteins mostly dissociate from the invaginating membrane before the ILV is released. The ESCRT machinery also functions in topologically equivalent membrane fission events, such as the terminal stages of cytokinesis. ESCRT-III proteins are believed to mediate the necessary vesicle extrusion and/or membrane fission activities, possibly in conjunction with the AAA ATPase VPS4. In the ESCRT-III complex, it probably serves as an acceptor for the ESCRT-II complex on endosomal membranes. The sequence is that of Charged multivesicular body protein 6 (Chmp6) from Mus musculus (Mouse).